Reading from the N-terminus, the 426-residue chain is Putative phosphate permease CPn_0680/CP_0067/CPj0680/CpB0707 (426 aa).

11 helical membrane passes run 1–21, 42–62, 87–107, 112–132, 137–157, 180–200, 207–227, 260–280, 313–333, 364–384, and 399–419; these read MLPL…NIGA, AVVI…DRVA, TAAL…GWPV, SIVG…IIYW, IILI…YLIF, FLAA…GVIL, WAVS…FYYV, LVVE…MAFA, LMAF…WRVI, ILGL…GIGL, and IVLS…LFFF.

This sequence belongs to the inorganic phosphate transporter (PiT) (TC 2.A.20) family.

It localises to the cell membrane. Its function is as follows. Potential transporter for phosphate. The chain is Putative phosphate permease CPn_0680/CP_0067/CPj0680/CpB0707 from Chlamydia pneumoniae (Chlamydophila pneumoniae).